Reading from the N-terminus, the 310-residue chain is N-acetyl-gamma-glutamyl-phosphate reductase (310 aa).

Residue Cys117 is part of the active site.

This sequence belongs to the NAGSA dehydrogenase family. Type 2 subfamily.

It is found in the cytoplasm. It catalyses the reaction N-acetyl-L-glutamate 5-semialdehyde + phosphate + NADP(+) = N-acetyl-L-glutamyl 5-phosphate + NADPH + H(+). The protein operates within amino-acid biosynthesis; L-arginine biosynthesis; N(2)-acetyl-L-ornithine from L-glutamate: step 3/4. Functionally, catalyzes the NADPH-dependent reduction of N-acetyl-5-glutamyl phosphate to yield N-acetyl-L-glutamate 5-semialdehyde. This is N-acetyl-gamma-glutamyl-phosphate reductase from Allorhizobium ampelinum (strain ATCC BAA-846 / DSM 112012 / S4) (Agrobacterium vitis (strain S4)).